We begin with the raw amino-acid sequence, 356 residues long: tRNA pseudouridine synthase D (356 aa).

The active-site Nucleophile is Asp-84. One can recognise a TRUD domain in the interval 159-302 (GVPNYYGPQR…RRGARRPIRV (144 aa)).

The protein belongs to the pseudouridine synthase TruD family.

It catalyses the reaction uridine(13) in tRNA = pseudouridine(13) in tRNA. Responsible for synthesis of pseudouridine from uracil-13 in transfer RNAs. This Thermus thermophilus (strain ATCC BAA-163 / DSM 7039 / HB27) protein is tRNA pseudouridine synthase D.